The sequence spans 346 residues: Zinc transporter YKE4 (346 aa).

Residues 1 to 2 (MK) lie on the Extracellular side of the membrane. A helical transmembrane segment spans residues 3–23 (ASHICSYLLSIAPLVVSHGVH). Over 24–69 (HNRDHGHEANHESKQSFLILKQESIFYSLVCFLQNHLFVLGPRYNA) the chain is Cytoplasmic. The chain crosses the membrane as a helical span at residues 70 to 90 (IVAILIIQLMPCLFVLFVPGL). Over 91–99 (RKNDRASLT) the chain is Extracellular. A helical transmembrane segment spans residues 100 to 120 (LSLLVSFSLGTLLGDILLHVI). The Cytoplasmic segment spans residues 121–126 (PESLSG). The helical transmembrane segment at 127 to 147 (VTDVTMVGGAIFLGFISFLTL) threads the bilayer. Over 148 to 202 (DKTMRILSGTSNDDGSIHSHSHSHTPQQTAEKKAGFNMSAYLNVISGIAHHITDG) the chain is Extracellular. Residue Asn-184 is glycosylated (N-linked (GlcNAc...) asparagine). Residues 203–223 (IALATSFYSSTQVGIMTSIAV) form a helical membrane-spanning segment. Topologically, residues 224–252 (TFHEIPHELGDFAILLSSGFTFPQAIRAQ) are cytoplasmic. The chain crosses the membrane as a helical span at residues 253 to 273 (AVTAFGAVVGTSIGCWMNEIG). Asn-274 and Asn-285 each carry an N-linked (GlcNAc...) asparagine glycan. The Extracellular segment spans residues 274–290 (NNSHKATSSSANASELM). A helical membrane pass occupies residues 291 to 311 (LPFTAGGLIYIATTSVVPQIL). Residues 312-322 (HSSAPDSKLRE) lie on the Cytoplasmic side of the membrane. The chain crosses the membrane as a helical span at residues 323-343 (FKKWALQLVFIFVGFAVMALM). Residues 344 to 346 (DEH) are Extracellular-facing.

This sequence belongs to the ZIP transporter (TC 2.A.5) family. KE4/Catsup subfamily.

The protein localises to the endoplasmic reticulum membrane. Its function is as follows. Zinc transporter whose role depends on the zinc status of the cells. It helps to balance zinc levels between the cytosol and the secretory pathway. It transports zinc into the secretory pathway in a zinc-adequate environment and in a high zinc medium. In high zinc medium, transport of zinc into the secretory pathway is a way to eliminate zinc from the cytosol. Under low cytosolic zinc conditions, it removes zinc from the secretory pathway and acts as a zinc importer that helps to alleviate ER stress. The polypeptide is Zinc transporter YKE4 (YKE4) (Saccharomyces cerevisiae (strain ATCC 204508 / S288c) (Baker's yeast)).